The primary structure comprises 452 residues: Deoxybrevianamide E synthase notF (452 aa).

A compositionally biased stretch (basic and acidic residues) spans 1 to 19 (MTAPELRVDTFRAPEDAPK). The segment at 1–38 (MTAPELRVDTFRAPEDAPKEPSAQQPRLPSSPSPAQAL) is disordered. Low complexity predominate over residues 21 to 38 (PSAQQPRLPSSPSPAQAL). E108 provides a ligand contact to brevianamide F. 8 residues coordinate dimethylallyl diphosphate: R122, K212, Y214, K282, Y284, Y371, Y436, and Y440.

The protein belongs to the tryptophan dimethylallyltransferase family. As to quaternary structure, monomer.

The catalysed reaction is brevianamide F + dimethylallyl diphosphate = deoxybrevianamide E + diphosphate. The protein operates within alkaloid biosynthesis. Addition of 5 mM Mg(2+), Ca(2+) or Mn(2+) slightly enhances catalysis (about 100-120%). Significant reduction of enzyme activity (2%-35%) is observed with Cu(2+), Zn(2+), Fe(2+), or Sn(2+) (5 mM). Deoxybrevianamide E synthase; part of the gene cluster that mediates the biosynthesis of notoamide, a fungal indole alkaloid that belongs to a family of natural products containing a characteristic bicyclo[2.2.2]diazaoctane core. The first step of notoamide biosynthesis involves coupling of L-proline and L-tryptophan by the bimodular NRPS notE, to produce cyclo-L-tryptophan-L-proline called brevianamide F. The reverse prenyltransferase notF then acts as a deoxybrevianamide E synthase and converts brevianamide F to deoxybrevianamide E via reverse prenylation at C-2 of the indole ring leading to the bicyclo[2.2.2]diazaoctane core. Deoxybrevianamide E is further hydroxylated at C-6 of the indole ring, likely catalyzed by the cytochrome P450 monooxygenase notG, to yield 6-hydroxy-deoxybrevianamide E. 6-hydroxy-deoxybrevianamide E is a specific substrate of the prenyltransferase notC for normal prenylation at C-7 to produce 6-hydroxy-7-prenyl-deoxybrevianamide, also called notoamide S. As the proposed pivotal branching point in notoamide biosynthesis, notoamide S can be diverted to notoamide E through an oxidative pyran ring closure putatively catalyzed by either notH cytochrome P450 monooxygenase or the notD FAD-linked oxidoreductase. This step would be followed by an indole 2,3-epoxidation-initiated pinacol-like rearrangement catalyzed by the notB FAD-dependent monooxygenase leading to the formation of notoamide C and notoamide D. On the other hand notoamide S is converted to notoamide T by notH (or notD), a bifunctional oxidase that also functions as the intramolecular Diels-Alderase responsible for generation of (+)-notoamide T. To generate antipodal (-)-notoaminide T, notH' (or notD') in Aspergillus versicolor is expected to catalyze a Diels-Alder reaction leading to the opposite stereochemistry. The remaining oxidoreductase notD (or notH) likely catalyzes the oxidative pyran ring formation to yield (+)-stephacidin A. The FAD-dependent monooxygenase notI is highly similar to notB and is predicted to catalyze a similar conversion from (+)-stephacidin A to (-)-notoamide B via the 2,3-epoxidation of (+)-stephacidin A followed by a pinacol-type rearrangement. Finally, it remains unclear which enzyme could be responsible for the final hydroxylation steps leading to notoamide A and sclerotiamide. This is Deoxybrevianamide E synthase notF from Aspergillus sp. (strain MF297-2).